Reading from the N-terminus, the 1390-residue chain is Nuclear pore complex protein 14 (1390 aa).

2 stretches are compositionally biased toward polar residues: residues 434–455 and 464–521; these read SQKPISAPPSDQTPVTKPSTVF and LKSS…STPK. 3 disordered regions span residues 434 to 530, 851 to 874, and 985 to 1118; these read SQKP…KISD, PSSSLFSASPSTPSTKSDAATQAD, and QEIE…SKAA. The span at 851–864 shows a compositional bias: low complexity; the sequence is PSSSLFSASPSTPS. The span at 986-1033 shows a compositional bias: basic and acidic residues; that stretch reads EIEKASSKVETLNKTEEVKDEKSENEVTPDLKSEEPKSLETKVKEEPK. The segment covering 1051–1071 has biased composition (low complexity); it reads KTPSFSFNSTTTPKSTSSTSS. Repeat unit 1 spans residues 1073-1074; sequence FG. The segment at 1073–1373 is 17 X 2 AA repeats of F-G; that stretch reads FGGGLKTQTP…TPAPTSSVFG (301 aa). The segment covering 1078–1090 has biased composition (polar residues); it reads KTQTPSSSNSTNI. Copy 2 of the repeat occupies 1091-1092; that stretch reads FG. Low complexity predominate over residues 1095–1109; sequence TTTTATPTPASNTSS. 6 tandem repeats follow at residues 1111–1112, 1122–1123, 1125–1126, 1163–1164, 1166–1167, and 1178–1179. The disordered stretch occupies residues 1183 to 1280; that stretch reads TAPTVPNVDD…QASAPATGTS (98 aa). Positions 1201 to 1210 are enriched in gly residues; the sequence is NGGGSGGFMS. The span at 1231 to 1243 shows a compositional bias: low complexity; that stretch reads TSTGTSASSSSWL. The stretch at 1244–1245 is repeat 9; the sequence is FG. Residues 1264–1280 show a composition bias toward low complexity; sequence TAGSSAQQASAPATGTS. 8 consecutive repeat copies span residues 1283 to 1284, 1289 to 1290, 1295 to 1296, 1300 to 1301, 1315 to 1316, 1344 to 1345, 1357 to 1358, and 1372 to 1373. Over residues 1342–1371 the composition is skewed to polar residues; sequence SLFGGGATPQTNTSIFGGGANTTPAPTSSV. Residues 1342–1390 are disordered; it reads SLFGGGATPQTNTSIFGGGANTTPAPTSSVFGGGASANANKPTSFTSWR. Residues 1378-1390 are compositionally biased toward polar residues; sequence ANANKPTSFTSWR.

In terms of assembly, interacts with caspase ced-3 (via propeptide); the interaction tethers ced-3 to the nuclear membrane and prevents its autoprocessing in absence of ced-4.

It localises to the nucleus. Its subcellular location is the nuclear pore complex. It is found in the nucleus membrane. Its function is as follows. May serve as a docking site in the receptor-mediated import of substrates across the nuclear pore complex. Plays a role in apoptosis by tethering caspase ced-3 to the nuclear membrane preventing its autoprocessing in absence of ced-4. The sequence is that of Nuclear pore complex protein 14 from Caenorhabditis elegans.